The primary structure comprises 236 residues: Alpha-acetolactate decarboxylase (236 aa).

It belongs to the alpha-acetolactate decarboxylase family.

It carries out the reaction (2S)-2-acetolactate + H(+) = (R)-acetoin + CO2. It participates in polyol metabolism; (R,R)-butane-2,3-diol biosynthesis; (R,R)-butane-2,3-diol from pyruvate: step 2/3. Its function is as follows. Converts acetolactate into acetoin. The sequence is that of Alpha-acetolactate decarboxylase (aldB) from Lactococcus lactis subsp. lactis (strain IL1403) (Streptococcus lactis).